Reading from the N-terminus, the 208-residue chain is Small ribosomal subunit protein uS9c (208 aa).

The transit peptide at 1 to 51 directs the protein to the chloroplast; sequence MAVSISSLTSSFASLSFTSNLTPKPQTLPMARTKPFSLSNPAVVKPLVITA. Thr52 is subject to N-acetylthreonine. The interval 185–208 is disordered; that stretch reads DSRIVERKKPGLKKARKAPQFSKR. The segment covering 194–208 has biased composition (basic residues); the sequence is PGLKKARKAPQFSKR.

Component of the chloroplast small ribosomal subunit (SSU). Mature 70S chloroplast ribosomes of higher plants consist of a small (30S) and a large (50S) subunit. The 30S small subunit contains 1 molecule of ribosomal RNA (16S rRNA) and 24 different proteins. The 50S large subunit contains 3 rRNA molecules (23S, 5S and 4.5S rRNA) and 33 different proteins. uS9c binds directly to 16S ribosomal RNA. uS9c interacts with translation factor pY (PSRP1).

The protein localises to the plastid. It is found in the chloroplast. In terms of biological role, component of the chloroplast ribosome (chloro-ribosome), a dedicated translation machinery responsible for the synthesis of chloroplast genome-encoded proteins, including proteins of the transcription and translation machinery and components of the photosynthetic apparatus. The polypeptide is Small ribosomal subunit protein uS9c (PRPS9) (Spinacia oleracea (Spinach)).